Consider the following 239-residue polypeptide: Transcriptional regulatory protein RstA (239 aa).

The region spanning 3–116 is the Response regulatory domain; it reads TIVFVEDDAE…VLLARLRLHL (114 aa). D52 bears the 4-aspartylphosphate mark. Residues 136–235 constitute a DNA-binding region (ompR/PhoB-type); sequence YKALHFGTLT…VRNKGYLFAP (100 aa).

Phosphorylated by RstB.

The protein resides in the cytoplasm. Its function is as follows. Member of the two-component regulatory system RstB/RstA. In Escherichia coli (strain K12), this protein is Transcriptional regulatory protein RstA (rstA).